A 305-amino-acid polypeptide reads, in one-letter code: Ribonucleoside-diphosphate reductase small subunit (305 aa).

Positions 64, 94, and 97 each coordinate Fe cation. Tyr101 is a catalytic residue. Residues 150–170 (ILLFLLVEGIFFISSFFSIGL) form a helical membrane-spanning segment. 3 residues coordinate Fe cation: Glu157, Glu191, and His194.

Belongs to the ribonucleoside diphosphate reductase small chain family. Heterotetramer composed of a homodimer of the large subunit (R1) and a homodimer of the small subunit (R2). Larger multisubunit protein complex are also active, composed of (R1)n(R2)n. Fe cation is required as a cofactor.

The protein resides in the host membrane. The enzyme catalyses a 2'-deoxyribonucleoside 5'-diphosphate + [thioredoxin]-disulfide + H2O = a ribonucleoside 5'-diphosphate + [thioredoxin]-dithiol. Ribonucleoside-diphosphate reductase holoenzyme provides the precursors necessary for viral DNA synthesis. Allows virus growth in non-dividing cells, as well as reactivation from latency in infected hosts. Catalyzes the biosynthesis of deoxyribonucleotides from the corresponding ribonucleotides. This Saimiri sciureus (Common squirrel monkey) protein is Ribonucleoside-diphosphate reductase small subunit.